The chain runs to 335 residues: Prepilin leader peptidase/N-methyltransferase (335 aa).

A helical membrane pass occupies residues 13–33 (LFAVFLFVLGLCVGSFLNVVI). 4 residues coordinate Zn(2+): Cys-49, Cys-52, Cys-74, and Cys-77. 5 consecutive transmembrane segments (helical) span residues 105 to 125 (WTYE…LAFI), 131 to 151 (ILPL…AFPL), 206 to 226 (LLGV…LMLL), 258 to 278 (PGLP…VQPI), and 299 to 319 (IPFG…GPWL).

This sequence belongs to the peptidase A24 family. The cofactor is Zn(2+).

The protein localises to the cell inner membrane. The catalysed reaction is Typically cleaves a -Gly-|-Phe- bond to release an N-terminal, basic peptide of 5-8 residues from type IV prepilin, and then N-methylates the new N-terminal amino group, the methyl donor being S-adenosyl-L-methionine.. Functionally, plays an essential role in type IV pili and type II pseudopili formation by proteolytically removing the leader sequence from substrate proteins and subsequently monomethylating the alpha-amino group of the newly exposed N-terminal phenylalanine. The chain is Prepilin leader peptidase/N-methyltransferase (pilD) from Myxococcus xanthus (strain DK1622).